A 287-amino-acid chain; its full sequence is Bifunctional protein FolD (287 aa).

Residues 164–166 (GSS), serine 189, and isoleucine 230 each bind NADP(+).

The protein belongs to the tetrahydrofolate dehydrogenase/cyclohydrolase family. Homodimer.

The catalysed reaction is (6R)-5,10-methylene-5,6,7,8-tetrahydrofolate + NADP(+) = (6R)-5,10-methenyltetrahydrofolate + NADPH. The enzyme catalyses (6R)-5,10-methenyltetrahydrofolate + H2O = (6R)-10-formyltetrahydrofolate + H(+). The protein operates within one-carbon metabolism; tetrahydrofolate interconversion. Its function is as follows. Catalyzes the oxidation of 5,10-methylenetetrahydrofolate to 5,10-methenyltetrahydrofolate and then the hydrolysis of 5,10-methenyltetrahydrofolate to 10-formyltetrahydrofolate. This chain is Bifunctional protein FolD, found in Aliarcobacter butzleri (strain RM4018) (Arcobacter butzleri).